Reading from the N-terminus, the 330-residue chain is Protein-lysine N-methyltransferase EEF2KMT (330 aa).

Position 1 is an N-acetylmethionine (methionine 1). S-adenosyl-L-methionine contacts are provided by residues tryptophan 139, 165–167 (GSG), tryptophan 228, and alanine 247.

Belongs to the class I-like SAM-binding methyltransferase superfamily. EEF2KMT family. In terms of assembly, interacts with FAM86B2 and FAM86C1P.

It is found in the cytoplasm. The catalysed reaction is L-lysyl-[protein] + 3 S-adenosyl-L-methionine = N(6),N(6),N(6)-trimethyl-L-lysyl-[protein] + 3 S-adenosyl-L-homocysteine + 3 H(+). Its function is as follows. Catalyzes the trimethylation of eukaryotic elongation factor 2 (EEF2) on 'Lys-525'. This is Protein-lysine N-methyltransferase EEF2KMT from Homo sapiens (Human).